A 505-amino-acid chain; its full sequence is Zinc metalloproteinase/disintegrin (505 aa).

A signal peptide spans 1–20; that stretch reads MIQVLLVIICLAAFPYQGTS. The propeptide occupies 21–214; sequence IILESGNVND…PIKKASQSNL (194 aa). Tandem repeats lie at residues 153-179 and 180-206. Residues 220–416 form the Peptidase M12B domain; sequence RYIELVIVAD…QKPQCILNKP (197 aa). The Ca(2+) site is built by Glu223 and Asp307. His356 is a binding site for Zn(2+). Glu357 is a catalytic residue. Zn(2+)-binding residues include His360 and His366. 2 cysteine pairs are disulfide-bonded: Cys371-Cys395 and Cys373-Cys378. Ca(2+) is bound by residues Cys411 and Asn414. A propeptide spanning residues 417–432 is cleaved from the precursor; sequence LRTDTVSTPVSGNELL. One can recognise a Disintegrin domain in the interval 424–505; it reads TPVSGNELLE…AGCPRNPFHA (82 aa). 6 disulfide bridges follow: Cys438-Cys453, Cys440-Cys448, Cys447-Cys470, Cys461-Cys467, Cys466-Cys491, and Cys479-Cys498. Residues 483-485 carry the Cell attachment site motif; sequence RGD.

It belongs to the venom metalloproteinase (M12B) family. P-II subfamily. P-IIa sub-subfamily. Monomer. Zn(2+) is required as a cofactor. As to expression, expressed by the venom gland.

It is found in the secreted. In terms of biological role, impairs hemostasis in the envenomed animal. Inhibits platelet aggregation induced by ADP, thrombin, platelet-activating factor and collagen. Acts by inhibiting fibrinogen interaction with platelet receptors GPIIb/GPIIIa (ITGA2B/ITGB3). The polypeptide is Zinc metalloproteinase/disintegrin (Gloydius brevicauda (Korean slamosa snake)).